A 206-amino-acid chain; its full sequence is ATP-dependent Clp protease proteolytic subunit 1 (206 aa).

The active-site Nucleophile is the Ser106. His131 is a catalytic residue.

It belongs to the peptidase S14 family. In terms of assembly, fourteen ClpP subunits assemble into 2 heptameric rings which stack back to back to give a disk-like structure with a central cavity, resembling the structure of eukaryotic proteasomes.

It localises to the cytoplasm. The enzyme catalyses Hydrolysis of proteins to small peptides in the presence of ATP and magnesium. alpha-casein is the usual test substrate. In the absence of ATP, only oligopeptides shorter than five residues are hydrolyzed (such as succinyl-Leu-Tyr-|-NHMec, and Leu-Tyr-Leu-|-Tyr-Trp, in which cleavage of the -Tyr-|-Leu- and -Tyr-|-Trp bonds also occurs).. In terms of biological role, cleaves peptides in various proteins in a process that requires ATP hydrolysis. Has a chymotrypsin-like activity. Plays a major role in the degradation of misfolded proteins. The protein is ATP-dependent Clp protease proteolytic subunit 1 of Methylococcus capsulatus (strain ATCC 33009 / NCIMB 11132 / Bath).